Consider the following 405-residue polypeptide: Argininosuccinate synthase (405 aa).

Residues 10–18 and Ala37 each bind ATP; that span reads AYSGGLDTS. L-citrulline contacts are provided by Tyr88 and Ser93. Residue Gly118 coordinates ATP. L-aspartate contacts are provided by Thr120, Asn124, and Asp125. Asn124 contributes to the L-citrulline binding site. Residues Arg128, Ser179, Ser188, Glu264, and Tyr276 each coordinate L-citrulline.

It belongs to the argininosuccinate synthase family. Type 1 subfamily. As to quaternary structure, homotetramer.

It localises to the cytoplasm. The enzyme catalyses L-citrulline + L-aspartate + ATP = 2-(N(omega)-L-arginino)succinate + AMP + diphosphate + H(+). It functions in the pathway amino-acid biosynthesis; L-arginine biosynthesis; L-arginine from L-ornithine and carbamoyl phosphate: step 2/3. This is Argininosuccinate synthase from Pseudomonas putida (strain GB-1).